The chain runs to 182 residues: Glycerol-3-phosphate acyltransferase 1 (182 aa).

5 consecutive transmembrane segments (helical) span residues 5-25 (MQFL…AYIV), 54-74 (GYFI…VSIA), 81-101 (STFV…PIVF), 117-137 (IAFD…FYLI), and 157-177 (ILYS…VLIL).

This sequence belongs to the PlsY family. As to quaternary structure, probably interacts with PlsX.

It is found in the cell membrane. The catalysed reaction is an acyl phosphate + sn-glycerol 3-phosphate = a 1-acyl-sn-glycero-3-phosphate + phosphate. The protein operates within lipid metabolism; phospholipid metabolism. Its function is as follows. Catalyzes the transfer of an acyl group from acyl-phosphate (acyl-PO(4)) to glycerol-3-phosphate (G3P) to form lysophosphatidic acid (LPA). This enzyme utilizes acyl-phosphate as fatty acyl donor, but not acyl-CoA or acyl-ACP. This chain is Glycerol-3-phosphate acyltransferase 1, found in Bacillus cereus (strain ATCC 10987 / NRS 248).